Here is a 208-residue protein sequence, read N- to C-terminus: Uracil phosphoribosyltransferase (208 aa).

5-phospho-alpha-D-ribose 1-diphosphate-binding positions include R78, R103, and 130–138; that span reads DPMLATGGS. Uracil contacts are provided by residues I193 and 198–200; that span reads GDA. D199 is a 5-phospho-alpha-D-ribose 1-diphosphate binding site.

This sequence belongs to the UPRTase family. Mg(2+) serves as cofactor.

It catalyses the reaction UMP + diphosphate = 5-phospho-alpha-D-ribose 1-diphosphate + uracil. The protein operates within pyrimidine metabolism; UMP biosynthesis via salvage pathway; UMP from uracil: step 1/1. With respect to regulation, allosterically activated by GTP. In terms of biological role, catalyzes the conversion of uracil and 5-phospho-alpha-D-ribose 1-diphosphate (PRPP) to UMP and diphosphate. The protein is Uracil phosphoribosyltransferase of Shewanella piezotolerans (strain WP3 / JCM 13877).